A 520-amino-acid polypeptide reads, in one-letter code: Transactivator/viroplasmin protein (520 aa).

2 disordered regions span residues 32–51 and 487–520; these read GSSQ…KEEA and QDAS…KQVD. Over residues 40–51 the composition is skewed to basic and acidic residues; it reads SLHRETPEKEEA.

This sequence belongs to the caulimoviridae viroplasmin family.

It is found in the host cytoplasm. In terms of biological role, enhances the ribosomal termination-reinitiation event leading to the translation of major open reading frames on the polycistronic viral RNAs. This is Transactivator/viroplasmin protein from Arabidopsis thaliana (Mouse-ear cress).